The sequence spans 282 residues: Keratin-associated protein 10-1 (282 aa).

24 consecutive repeat copies span residues 26 to 30, 31 to 35, 36 to 40, 57 to 61, 79 to 83, 89 to 93, 99 to 103, 104 to 108, 109 to 113, 121 to 125, 131 to 135, 141 to 145, 146 to 150, 163 to 167, 173 to 177, 183 to 187, 193 to 197, 198 to 202, 210 to 214, 220 to 224, 225 to 229, 244 to 248, 251 to 255, and 262 to 266. Residues 26-266 form a 24 X 5 AA repeats of C-C-X(3) region; the sequence is CCEPHCCALS…SCQASCCRPA (241 aa).

Belongs to the KRTAP type 10 family. In terms of assembly, interacts with hair keratins. In terms of tissue distribution, restricted to a narrow region of the hair fiber cuticle, lying approximately 20 cell layers above the apex of the dermal papilla of the hair root; not detected in any other tissues.

In terms of biological role, in the hair cortex, hair keratin intermediate filaments are embedded in an interfilamentous matrix, consisting of hair keratin-associated proteins (KRTAP), which are essential for the formation of a rigid and resistant hair shaft through their extensive disulfide bond cross-linking with abundant cysteine residues of hair keratins. The matrix proteins include the high-sulfur and high-glycine-tyrosine keratins. In Homo sapiens (Human), this protein is Keratin-associated protein 10-1 (KRTAP10-1).